A 271-amino-acid polypeptide reads, in one-letter code: Tryptophan synthase alpha chain (271 aa).

Catalysis depends on proton acceptor residues Glu47 and Asp58.

Belongs to the TrpA family. As to quaternary structure, tetramer of two alpha and two beta chains.

It carries out the reaction (1S,2R)-1-C-(indol-3-yl)glycerol 3-phosphate + L-serine = D-glyceraldehyde 3-phosphate + L-tryptophan + H2O. It participates in amino-acid biosynthesis; L-tryptophan biosynthesis; L-tryptophan from chorismate: step 5/5. In terms of biological role, the alpha subunit is responsible for the aldol cleavage of indoleglycerol phosphate to indole and glyceraldehyde 3-phosphate. In Thermus thermophilus (strain ATCC BAA-163 / DSM 7039 / HB27), this protein is Tryptophan synthase alpha chain.